The sequence spans 1203 residues: Partitioning defective 3 homolog B (1203 aa).

2 disordered regions span residues 79 to 104 (FDEQ…PDAF) and 138 to 162 (RRSS…SGQS). Serine 100 bears the Phosphoserine mark. Over residues 152-162 (QPSTASLSGQS) the composition is skewed to polar residues. A PDZ 1 domain is found at 201–289 (TRAVEISGEG…SPSVILHVLL (89 aa)). The tract at residues 334-374 (TRASSPEGEEPASPQQSKSPRVPRLGRKPSSPSLSPLMGFG) is disordered. Residues serine 346, serine 352, and serine 368 each carry the phosphoserine modification. 2 consecutive PDZ domains span residues 383 to 468 (KIDL…VIAR) and 496 to 585 (TLEI…GMIQ). A phosphoserine mark is found at serine 635, serine 710, serine 728, serine 730, serine 746, serine 749, and serine 801. Basic and acidic residues predominate over residues 718–732 (GKVQSLADRRSDSPG). A disordered region spans residues 718-743 (GKVQSLADRRSDSPGKDFGPTLGLKK). 3 disordered regions span residues 787–927 (KSYD…EKQA), 968–994 (VFRS…PDHL), and 1050–1203 (RPSD…TAAV). Threonine 810 is modified (phosphothreonine). Basic and acidic residues predominate over residues 827 to 842 (VENKAKNIKKTKEKEK). The segment covering 843 to 854 (KKGKGKLKVKEK) has biased composition (basic residues). 4 stretches are compositionally biased toward basic and acidic residues: residues 855-865 (KLKEEHEDAER), 881-893 (KKDD…EQKG), 906-927 (ERMK…EKQA), and 984-994 (RDGRPLSPDHL). Serine 1088 and serine 1182 each carry phosphoserine.

This sequence belongs to the PAR3 family. Interacts with PARD6B. Interacts with INSC/inscuteable.

The protein localises to the endomembrane system. It localises to the cell junction. Its subcellular location is the tight junction. Its function is as follows. Putative adapter protein involved in asymmetrical cell division and cell polarization processes. May play a role in the formation of epithelial tight junctions. In Mus musculus (Mouse), this protein is Partitioning defective 3 homolog B (Pard3b).